The sequence spans 1854 residues: Immunoglobulin A1 protease (1854 aa).

An N-terminal signal peptide occupies residues 1–37; that stretch reads MKKFLGEKQTRFAFRKLAVGLVSAAISSLFFVSIVGV. Residues 38-99 constitute a propeptide that is removed on maturation; the sequence is DSVQAQEKLN…NAGAKTLPNT (62 aa). An LPXTG sorting signal motif is present at residues 96–100; that stretch reads LPNTG. Thr99 carries the pentaglycyl murein peptidoglycan amidated threonine modification. The next 2 helical transmembrane spans lie at 106-125 and 132-154; these read TMMAAGLLLTTIGLVVFAVS and KFLLTVLVGASVGGGLILSVDAL. Over 155–1854 the chain is Extracellular; sequence ENGSLLQYNA…FRKSIFENQK (1700 aa). Residues 256–335 form the G5 domain; the sequence is KPELLYKETS…PKIVEKGTKK (80 aa). A run of 10 repeats spans residues 349-368, 369-388, 389-406, 407-426, 427-446, 447-466, 467-486, 487-506, 507-526, and 527-546. Positions 349–546 are 10 X 20 AA approximate tandem repeats; sequence VQPEQVAPLP…EYTGNIEPAA (198 aa). Low complexity predominate over residues 533–550; sequence EPPQEYTGNIEPAAPEAE. Residues 533 to 570 are disordered; that stretch reads EPPQEYTGNIEPAAPEAENPTEKAQEPKEQKQEPEKNI. The span at 552–570 shows a compositional bias: basic and acidic residues; it reads PTEKAQEPKEQKQEPEKNI. His1494 lines the Zn(2+) pocket. The active site involves Glu1495. Positions 1498 and 1518 each coordinate Zn(2+).

Belongs to the peptidase M26 family. It depends on Zn(2+) as a cofactor. In terms of processing, the Gram-positive cell-wall anchor motif LPXTG is located in the N-terminal part, in contrast to such motifs in other known streptococcal and staphylococcal proteins. The protease could be cleaved by the sortase and anchored in the membrane via the two potential N-terminal transmembrane domains, whereas the propeptide located prior to the LPXTG motif would remain attached to the cell wall peptidoglycan by an amide bond.

It is found in the secreted. Its subcellular location is the cell wall. It localises to the membrane. It catalyses the reaction Cleavage of Pro-|-Thr bond in the hinge region of the heavy chain of human IgA.. Its activity is regulated as follows. Inhibited by EDTA. In terms of biological role, zinc metalloproteinase which cleaves human immunoglobulin A1 (IgA1) in the hinge region. In Streptococcus sanguinis, this protein is Immunoglobulin A1 protease (iga).